Here is a 602-residue protein sequence, read N- to C-terminus: 4-hydroxy-3-methylbut-2-en-1-yl diphosphate synthase (flavodoxin) (602 aa).

Positions 508, 511, 543, and 550 each coordinate [4Fe-4S] cluster.

This sequence belongs to the IspG family. [4Fe-4S] cluster serves as cofactor.

It catalyses the reaction (2E)-4-hydroxy-3-methylbut-2-enyl diphosphate + oxidized [flavodoxin] + H2O + 2 H(+) = 2-C-methyl-D-erythritol 2,4-cyclic diphosphate + reduced [flavodoxin]. It participates in isoprenoid biosynthesis; isopentenyl diphosphate biosynthesis via DXP pathway; isopentenyl diphosphate from 1-deoxy-D-xylulose 5-phosphate: step 5/6. Its function is as follows. Converts 2C-methyl-D-erythritol 2,4-cyclodiphosphate (ME-2,4cPP) into 1-hydroxy-2-methyl-2-(E)-butenyl 4-diphosphate. The chain is 4-hydroxy-3-methylbut-2-en-1-yl diphosphate synthase (flavodoxin) from Chlamydia trachomatis serovar L2b (strain UCH-1/proctitis).